A 118-amino-acid chain; its full sequence is Large ribosomal subunit protein bL19 (118 aa).

Belongs to the bacterial ribosomal protein bL19 family.

Its function is as follows. This protein is located at the 30S-50S ribosomal subunit interface and may play a role in the structure and function of the aminoacyl-tRNA binding site. This Geotalea daltonii (strain DSM 22248 / JCM 15807 / FRC-32) (Geobacter daltonii) protein is Large ribosomal subunit protein bL19.